Here is a 704-residue protein sequence, read N- to C-terminus: Phosphate acetyltransferase (704 aa).

Positions 380 to 704 (FNLIEKAKRN…IQAQAEKGLI (325 aa)) are phosphate acetyltransferase.

In the N-terminal section; belongs to the CobB/CobQ family. The protein in the C-terminal section; belongs to the phosphate acetyltransferase and butyryltransferase family. In terms of assembly, homohexamer.

It localises to the cytoplasm. It catalyses the reaction acetyl-CoA + phosphate = acetyl phosphate + CoA. The protein operates within metabolic intermediate biosynthesis; acetyl-CoA biosynthesis; acetyl-CoA from acetate: step 2/2. Involved in acetate metabolism. The protein is Phosphate acetyltransferase (pta) of Nitratidesulfovibrio vulgaris (strain ATCC 29579 / DSM 644 / CCUG 34227 / NCIMB 8303 / VKM B-1760 / Hildenborough) (Desulfovibrio vulgaris).